Reading from the N-terminus, the 191-residue chain is Putative endogenous retrovirus group K member 11-1 Env polyprotein (191 aa).

The truncated surface protein stretch occupies residues 1–191; sequence MPGAIDDHCP…DITLHPQGLV (191 aa).

Belongs to the beta type-B retroviral envelope protein family. HERV class-II K(HML-8) env subfamily. As to expression, cerebellum and testis.

The protein localises to the virion. Its function is as follows. Retroviral envelope proteins mediate receptor recognition and membrane fusion during early infection. Endogenous envelope proteins may have kept, lost or modified their original function during evolution. This chain is Putative endogenous retrovirus group K member 11-1 Env polyprotein (ERVK11-1), found in Homo sapiens (Human).